The chain runs to 94 residues: Sucrose operon repressor (94 aa).

An HTH lacI-type domain is found at 1–56 (MASLHDVARLAGVSKSTVSRVINDEYGVKEATKQKVRQAVAECGYVPNQVAKDLKE). Positions 4–23 (LHDVARLAGVSKSTVSRVIN) form a DNA-binding region, H-T-H motif.

In terms of biological role, repressor for the scr operon. Binds D-fructose as an inducer. This is Sucrose operon repressor (scrR) from Vibrio alginolyticus.